The following is a 603-amino-acid chain: MSDRLTRIAIVSEDRCKPKKCRQECKKSCPVVKTGKLCIEVGSTSKSAFISEELCIGCGICVKKCPFEAIQIINLPKDLAKDTTHRYGANGFKLHRLPIPRPGQVLGLVGTNGIGKSTALKILAGKLKPNLGRFNTPPDWEEILTHFRGSELQSYFIRVVEENLKTAIKPQHVDYIKEVVRGNLGKMLEKLDERGLMEEICADMELNQVLEREARQVSGGELQRFAIAAVFVKKADIYMFDEPSSYLDVRQRLKAAQVIRSLLRHDSYVIVVEHDLSVLDYLSDFVCCLYGKPGAYGVVTLPFSVREGINVFLAGFIPTENLRFRDESLTFRVSETTQENDGEVKSYARYKYPNMTKQLGDFKLEVMEGEFTDSQIIVMLGENGTGKTTFIRMLAGAFPREEGVQSEIPEFNVSYKPQGNDSKRECTVRQLLHDKIRDACAHPQFMSDVIRPLQIEQLMDQVVKTLSGGEKQRVAITLCLGKPADIYLIDEPSAHLDSEQRITASKVIKRFILHAKKTAFIVEHDFIMATYLADRVIVYEGQPAVKCIAHSPQSLLSGMNHFLSHLNITFRRDPTNFRPRINKLESIKDKEQKTAGSYYYLDD.

2 4Fe-4S ferredoxin-type domains span residues 7 to 39 (RIAI…KLCI) and 46 to 75 (KSAF…IINL). 2 ABC transporter domains span residues 70-315 (IQII…FLAG) and 344-566 (VKSY…LSHL). ATP-binding positions include 110–117 (GTNGIGKS) and 381–388 (GENGTGKT).

The protein belongs to the ABC transporter superfamily. ABCE family. In terms of tissue distribution, expressed in roots, stems, leaves, flowers and siliques.

The protein localises to the membrane. This is ABC transporter E family member 1 (ABCE1) from Arabidopsis thaliana (Mouse-ear cress).